The following is a 64-amino-acid chain: Prokaryotic ubiquitin-like protein Pup (64 aa).

A disordered region spans residues 1–37; that stretch reads MAQEQTQRAGGGEDDETTGGDGSAGQERREKLAAETD. The interval 21-58 is ARC ATPase binding; that stretch reads DGSAGQERREKLAAETDDLLDEIDDVLEENAEDFVRAY. Residues 24–52 are a coiled coil; it reads AGQERREKLAAETDDLLDEIDDVLEENAE. The residue at position 64 (Gln64) is a Deamidated glutamine. An Isoglutamyl lysine isopeptide (Gln-Lys) (interchain with K-? in acceptor proteins) cross-link involves residue Gln64.

The protein belongs to the prokaryotic ubiquitin-like protein family. As to quaternary structure, strongly interacts with the proteasome-associated ATPase ARC through a hydrophobic interface; the interacting region of Pup lies in its C-terminal half. There is one Pup binding site per ARC hexamer ring. In terms of processing, is modified by deamidation of its C-terminal glutamine to glutamate by the deamidase Dop, a prerequisite to the subsequent pupylation process.

It functions in the pathway protein degradation; proteasomal Pup-dependent pathway. Protein modifier that is covalently attached to lysine residues of substrate proteins, thereby targeting them for proteasomal degradation. The tagging system is termed pupylation. The sequence is that of Prokaryotic ubiquitin-like protein Pup from Rhodococcus erythropolis (strain PR4 / NBRC 100887).